Consider the following 110-residue polypeptide: Protein YcgL (110 aa).

One can recognise a YcgL domain in the interval 14–98 (MFCVIYRSSK…PPEDLLKQHL (85 aa)). The disordered stretch occupies residues 87–110 (PPPPEDLLKQHLSSVGQNTSSADR). Polar residues predominate over residues 97-110 (HLSSVGQNTSSADR).

This is Protein YcgL from Salmonella newport (strain SL254).